Here is a 968-residue protein sequence, read N- to C-terminus: AP2-associated protein kinase 1 (968 aa).

Residue methionine 1 is modified to N-acetylmethionine. A compositionally biased stretch (basic and acidic residues) spans 1–11; that stretch reads MKKFFDSRREQ. The segment at 1–25 is disordered; sequence MKKFFDSRREQGGSGLGSGSSGGGG. The span at 12–25 shows a compositional bias: gly residues; sequence GGSGLGSGSSGGGG. Serine 14 carries the phosphoserine modification. Residues 46–315 form the Protein kinase domain; sequence VTVDEVLAEG…QVSFFSFKLL (270 aa). Residues 52–60 and lysine 74 contribute to the ATP site; that span reads LAEGGFAIV. Residue aspartate 176 is the Proton acceptor of the active site. At tyrosine 234 the chain carries Phosphotyrosine. The residue at position 235 (serine 235) is a Phosphoserine. 2 disordered regions span residues 327-485 and 578-640; these read SPIP…AQAP and IQPP…AGHR. Threonine 354 and threonine 389 each carry phosphothreonine. Arginine 391 carries the omega-N-methylarginine modification. A compositionally biased stretch (pro residues) spans 437 to 448; it reads QAPPAPQQPPSA. 2 stretches are compositionally biased toward low complexity: residues 449–472 and 578–589; these read PAQG…LKQQ and IQPPQAQPATAS. Threonine 613 carries the post-translational modification Phosphothreonine. Serine 625 bears the Phosphoserine mark. Threonine 627 bears the Phosphothreonine mark. Phosphoserine occurs at positions 630, 631, 644, and 657. Threonine 660 carries the post-translational modification Phosphothreonine. The disordered stretch occupies residues 671 to 708; that stretch reads SLNKSKSATTTPSGSPRASQQNVYNPSEGSTWNPFDDD. A compositionally biased stretch (polar residues) spans 679–703; sequence TTTPSGSPRASQQNVYNPSEGSTWN. The residue at position 694 (tyrosine 694) is a Phosphotyrosine. Phosphoserine is present on residues serine 738, serine 853, serine 944, and serine 945. Residues 830–967 form a clathrin-binding domain (CBD) region; that stretch reads EKADVAVESL…SLLLVDQLID (138 aa). Disordered regions lie at residues 843–862 and 929–952; these read LEPP…ASNR and PVLI…ESSL. Positions 851–862 are enriched in polar residues; the sequence is LPSQTESVASNR. Low complexity predominate over residues 938–951; that stretch reads GGHSRNSSGSSESS.

The protein belongs to the protein kinase superfamily. Ser/Thr protein kinase family. Interacts (via CBD domain) with clathrin. Interacts with AP-2 complex. Interacts with NUMB. Interacts with alpha-adaptin. Interacts with EPS15. Interacts with membrane-bound activated NOTCH1 but not with the inactive full-length form of NOTCH1. Preferentially interacts with monoubiquitinated activated NOTCH1 compared to the non-ubiquitinated form. In terms of processing, autophosphorylated.

The protein localises to the cell membrane. Its subcellular location is the membrane. It localises to the clathrin-coated pit. The protein resides in the presynapse. It carries out the reaction L-seryl-[protein] + ATP = O-phospho-L-seryl-[protein] + ADP + H(+). The catalysed reaction is L-threonyl-[protein] + ATP = O-phospho-L-threonyl-[protein] + ADP + H(+). Its activity is regulated as follows. Stimulated by clathrin. In terms of biological role, regulates clathrin-mediated endocytosis by phosphorylating the AP2M1/mu2 subunit of the adaptor protein complex 2 (AP-2) which ensures high affinity binding of AP-2 to cargo membrane proteins during the initial stages of endocytosis. Preferentially, may phosphorylate substrates on threonine residues. Regulates phosphorylation of other AP-2 subunits as well as AP-2 localization and AP-2-mediated internalization of ligand complexes. Phosphorylates NUMB and regulates its cellular localization, promoting NUMB localization to endosomes. Binds to and stabilizes the activated form of NOTCH1, increases its localization in endosomes and regulates its transcriptional activity. This chain is AP2-associated protein kinase 1 (AAK1), found in Sus scrofa (Pig).